A 124-amino-acid polypeptide reads, in one-letter code: Cholera enterotoxin subunit B (124 aa).

Positions 1–21 (MIKLKFGVFFTVLLSSAYAHG) are cleaved as a signal peptide. An intrachain disulfide couples Cys-30 to Cys-107.

In terms of assembly, the holotoxin (choleragen) consists of a pentameric ring of B subunits whose central pore is occupied by the A subunit. The A subunit contains two chains, A1 and A2, linked by a disulfide bridge.

Its subcellular location is the secreted. It localises to the host cell membrane. In terms of biological role, the B subunit pentameric ring directs the A subunit to its target by binding to the GM1 gangliosides present on the surface of the intestinal epithelial cells. It can bind five GM1 gangliosides. It has no toxic activity by itself. The chain is Cholera enterotoxin subunit B (ctxB) from Vibrio cholerae serotype O1 (strain ATCC 39315 / El Tor Inaba N16961).